A 279-amino-acid polypeptide reads, in one-letter code: GATA transcription factor 15 (279 aa).

Positions 52–94 (AYDDHSTVTTSPSSPSSSSTGSVDCTLSLGTPSSRRAEPVAAA) are disordered. Positions 58–74 (TVTTSPSSPSSSSTGSV) are enriched in low complexity. The GATA-type zinc-finger motif lies at 154 to 179 (CANCGTASTPLWRNGPRGPKSLCNAC).

The protein belongs to the type IV zinc-finger family. Class B subfamily. In terms of tissue distribution, highly expressed in inflorescences. Expressed in vascular bundles of root stele within the elongation zones, of elongating upper internodes and of the junctions of leaf blades and sheaths.

Probable transcription factor that regulates organogenesis during transition from the vegetative to the reproductive phase. Regulates the expression of CYP78A11/PLA1, HD3A and MADS1 during reproductive development in rice. May act upstream of CYP78A11/PLA1 during panicle development. Acts independently of the photoperiodic and gibberellin signaling pathways. In Oryza sativa subsp. japonica (Rice), this protein is GATA transcription factor 15.